A 310-amino-acid chain; its full sequence is AA9 family lytic polysaccharide monooxygenase A (310 aa).

A signal peptide spans 1–21; it reads MPSTKVAALSAVLALASTVAG. Residues histidine 22 and histidine 107 each contribute to the Cu(2+) site. 2 disulfides stabilise this stretch: cysteine 77/cysteine 199 and cysteine 118/cysteine 122. N-linked (GlcNAc...) asparagine glycosylation is found at asparagine 121 and asparagine 159. O2 is bound at residue histidine 185. Tyrosine 196 contacts Cu(2+).

Belongs to the polysaccharide monooxygenase AA9 family. Cu(2+) is required as a cofactor.

Its subcellular location is the secreted. The enzyme catalyses [(1-&gt;4)-beta-D-glucosyl]n+m + reduced acceptor + O2 = 4-dehydro-beta-D-glucosyl-[(1-&gt;4)-beta-D-glucosyl]n-1 + [(1-&gt;4)-beta-D-glucosyl]m + acceptor + H2O.. Lytic polysaccharide monooxygenase (LPMO) that depolymerizes crystalline and amorphous polysaccharides via the oxidation of scissile alpha- or beta-(1-4)-glycosidic bonds, yielding C1, C4 as well as C6 oxidation products. Catalysis by LPMOs requires the reduction of the active-site copper from Cu(II) to Cu(I) by a reducing agent and H(2)O(2) or O(2) as a cosubstrate. Active on cellulose, but not on xylan, starch, or chitin. This is AA9 family lytic polysaccharide monooxygenase A from Talaromyces pinophilus (Penicillium pinophilum).